A 954-amino-acid polypeptide reads, in one-letter code: MTELLQSLSTQNEFVGRHNGPKLSDQQKMLEAINAVSLDALISETVPANIRLEQPMTLAEAKSEADMLATMKQFAKQNQVKRTFIGQGYYNTFTPNVILRNVLENPGWYTAYTPYQPEISQGRLESLLNFQQMVIDLTGMEIANASLLDEATAAAEAMTLCKRAGKSKSNVFFVADDVHPQTIEVVKTRAKFIGFEVLVGSLESLPEQDVFGALVQYPSTTGEVRDLTDIIAKAQANKTLVTVATDLLACTLLKPAGEMGADVAIGSAQRFGVPMGYGGPHAAFMATRDKHKRTMPGRVIGVSIDAKGNQALRMAMQTREQHIRREKATSNICTAQALLANMASFYAVYHGAEGLRTIARRTHHMTAILAAGLTKGGFELAHNSFFDTITINTGEKTQDLYTKALAADINLRVLPGKLGISLDETTTVADVEALFAIFGVKEDVTALSTEVAGNEFAAIPEALRRTSEYLTHPVFNTYHSETQMMRYLKQLENKDFSLTHGMIPLGSCTMKLNAAAEMIPITWPEFGSIHPFAPAEQAAGYAALAKDLKEKLCEITGYDAFSLQPNSGASGEYAGLIAIQRYHESRGEGHRNVCLIPSSAHGTNPATASMVSMKVVVVKCDDEGNIDIDDLAAKIEKHKDNLSSIMITYPSTHGVYEEKVKEVCEMVHAAGGQVYLDGANMNAQVGLTSPGFIGSDVSHLNLHKTFCIPHGGGGPGMGPIGVKSHLAPFLPGHIENGVEGEDFAVSAADFGSASILPISWAYIAMMGEAGLSNATKVAILNANYVMERLRPHYPVLYRGKNGRVAHECIIDIRPLKEETGISEEDIAKRLMDYGFHAPTMSFPVAGTLMVEPTESEDLAELNRFCDAMISIREEMTKVKNGEWPLENNPLVNAPHTQVDLSAEEWDRPYSRELGCFPSKATKSWKYWPTVNRVDNVYGDRNLICSCPSIDNYED.

Lysine 704 carries the post-translational modification N6-(pyridoxal phosphate)lysine.

It belongs to the GcvP family. In terms of assembly, the glycine cleavage system is composed of four proteins: P, T, L and H. Pyridoxal 5'-phosphate is required as a cofactor.

It carries out the reaction N(6)-[(R)-lipoyl]-L-lysyl-[glycine-cleavage complex H protein] + glycine + H(+) = N(6)-[(R)-S(8)-aminomethyldihydrolipoyl]-L-lysyl-[glycine-cleavage complex H protein] + CO2. Its function is as follows. The glycine cleavage system catalyzes the degradation of glycine. The P protein binds the alpha-amino group of glycine through its pyridoxal phosphate cofactor; CO(2) is released and the remaining methylamine moiety is then transferred to the lipoamide cofactor of the H protein. The sequence is that of Glycine dehydrogenase (decarboxylating) from Vibrio parahaemolyticus serotype O3:K6 (strain RIMD 2210633).